The sequence spans 203 residues: Small ribosomal subunit protein uS4 (203 aa).

The 64-residue stretch at Arg93 to Val156 folds into the S4 RNA-binding domain.

This sequence belongs to the universal ribosomal protein uS4 family. As to quaternary structure, part of the 30S ribosomal subunit. Contacts protein S5. The interaction surface between S4 and S5 is involved in control of translational fidelity.

In terms of biological role, one of the primary rRNA binding proteins, it binds directly to 16S rRNA where it nucleates assembly of the body of the 30S subunit. Its function is as follows. With S5 and S12 plays an important role in translational accuracy. This chain is Small ribosomal subunit protein uS4, found in Streptococcus equi subsp. equi (strain 4047).